We begin with the raw amino-acid sequence, 379 residues long: Glucose-1-phosphate adenylyltransferase (379 aa).

Alpha-D-glucose 1-phosphate is bound by residues glycine 164, 179–180, and serine 190; that span reads EK.

This sequence belongs to the bacterial/plant glucose-1-phosphate adenylyltransferase family. As to quaternary structure, homotetramer.

The catalysed reaction is alpha-D-glucose 1-phosphate + ATP + H(+) = ADP-alpha-D-glucose + diphosphate. Its pathway is glycan biosynthesis; glycogen biosynthesis. Involved in the biosynthesis of ADP-glucose, a building block required for the elongation reactions to produce glycogen. Catalyzes the reaction between ATP and alpha-D-glucose 1-phosphate (G1P) to produce pyrophosphate and ADP-Glc. This is Glucose-1-phosphate adenylyltransferase from Lactiplantibacillus plantarum (strain ATCC BAA-793 / NCIMB 8826 / WCFS1) (Lactobacillus plantarum).